The chain runs to 1789 residues: Protein TIC 214 (1789 aa).

6 helical membrane passes run 19–39, 68–88, 91–111, 133–153, 176–196, and 227–247; these read IINSVVVVGLYYGFLTTFSIG, FIAGQLMMFISIYYAPLHLAL, PHTITVLALPYLLFHFFWNNH, VFLNNLIFQLFNHFILPSSML, VGWLIGHILFMKWVGLVLVWI, and IFSILLFITCVYYLGRIPSPI.

It belongs to the TIC214 family. In terms of assembly, part of the Tic complex.

It is found in the plastid. The protein resides in the chloroplast inner membrane. Involved in protein precursor import into chloroplasts. May be part of an intermediate translocation complex acting as a protein-conducting channel at the inner envelope. In Capsella bursa-pastoris (Shepherd's purse), this protein is Protein TIC 214.